The primary structure comprises 184 residues: Glucosamine 6-phosphate N-acetyltransferase (184 aa).

In terms of domain architecture, N-acetyltransferase spans 39 to 184 (LVLRPLCTAD…ENYMCRRFLK (146 aa)). Residues Thr-61, 108–111 (KFIH), and 120–122 (EDV) each bind substrate. Position 130 to 135 (130 to 135 (GKQLGK)) interacts with acetyl-CoA. 151 to 152 (YK) contacts substrate. Residue 165–167 (YKK) participates in acetyl-CoA binding. Substrate contacts are provided by Glu-175 and Arg-181.

Belongs to the acetyltransferase family. GNA1 subfamily. As to quaternary structure, homodimer. In terms of tissue distribution, ubiquitous. Shows a strong differential expression pattern in adult hematopoietic precursor cells.

The protein localises to the golgi apparatus membrane. It localises to the endosome membrane. The catalysed reaction is D-glucosamine 6-phosphate + acetyl-CoA = N-acetyl-D-glucosamine 6-phosphate + CoA + H(+). Its pathway is nucleotide-sugar biosynthesis; UDP-N-acetyl-alpha-D-glucosamine biosynthesis; N-acetyl-alpha-D-glucosamine 1-phosphate from alpha-D-glucosamine 6-phosphate (route I): step 1/2. This is Glucosamine 6-phosphate N-acetyltransferase (Gnpnat1) from Mus musculus (Mouse).